The sequence spans 141 residues: 15 kDa lipoprotein (141 aa).

A signal peptide spans 1–17 (MVKRGRFALCLAVLLGA). Cys18 carries the N-palmitoyl cysteine lipid modification. Cys18 carries the S-diacylglycerol cysteine lipid modification.

It localises to the cell membrane. The protein is 15 kDa lipoprotein (tpp15) of Treponema pallidum (strain Nichols).